A 320-amino-acid polypeptide reads, in one-letter code: Malate dehydrogenase (320 aa).

NAD(+) contacts are provided by residues glycine 10–glycine 15 and aspartate 34. The substrate site is built by arginine 83 and arginine 89. NAD(+) is bound by residues asparagine 96 and isoleucine 119 to asparagine 121. Substrate is bound by residues asparagine 121 and arginine 152. Residue histidine 176 is the Proton acceptor of the active site.

It belongs to the LDH/MDH superfamily. MDH type 3 family.

The catalysed reaction is (S)-malate + NAD(+) = oxaloacetate + NADH + H(+). In terms of biological role, catalyzes the reversible oxidation of malate to oxaloacetate. The chain is Malate dehydrogenase from Rhizobium etli (strain CIAT 652).